The sequence spans 591 residues: Complement component C8 beta chain (591 aa).

The N-terminal stretch at 1–32 (MKNSRTWAWRAPVELFLLCAALGCLSLPGSRG) is a signal peptide. Residues 33-54 (ERPHSFGSNAVNKSFAKSRQMR) constitute a propeptide that is removed on maturation. The TSP type-1 1 domain occupies 64-117 (DCELSSWSSWTTCDPCQKKRYRYAYLLQPSQFHGEPCNFSDKEVEDCVTNRPCG). 7 disulfide bridges follow: C65/C100, C76/C110, C79/C116, C122/C133, C127/C146, C140/C155, and C162/C200. 2 C-linked (Man) tryptophan glycosylation sites follow: W70 and W73. N-linked (GlcNAc...) asparagine glycosylation occurs at N101. Residues 120–157 (VRCEGFVCAQTGRCVNRRLLCNGDNDCGDQSDEANCRR) form the LDL-receptor class A domain. Ca(2+) contacts are provided by L138, N141, D143, D145, D151, and E152. The MACPF domain maps to 158-504 (IYKKCQHEMD…EFQKEVSSCH (347 aa)). An N-linked (GlcNAc...) asparagine glycan is attached at N243. 4 beta stranded membrane passes run 252-259 (SGFSFGFK), 262-269 (GIFELGIS), 379-386 (AKNDFKIG), and 392-399 (VYVSLGVS). A disulfide bond links C378 and C403. T418 carries the phosphothreonine modification. 4 cysteine pairs are disulfide-bonded: C503-C550, C505-C521, C508-C523, and C525-C534. Residues 505–535 (CAPCQGNGVPVLKGSRCDCICPVGSQGLACE) enclose the EGF-like domain. The TSP type-1 2 domain maps to 545 to 591 (DGKWNCWSNWSSCSGRRKTRQRQCNNPPPQNGGSPCSGPASETLDCS). 2 C-linked (Man) tryptophan glycosylation sites follow: W551 and W554. A disulfide bridge connects residues C557 and C590. The tract at residues 568–591 (CNNPPPQNGGSPCSGPASETLDCS) is disordered.

It belongs to the complement C6/C7/C8/C9 family. As to quaternary structure, heterotrimer of 3 chains: alpha (C8A), beta (C8B) and gamma (C8G); the alpha and gamma chains are disulfide bonded. Component of the membrane attack complex (MAC), composed of complement C5b, C6, C7, C8A, C8B, C8G and multiple copies of the pore-forming subunit C9. Post-translationally, N-glycosylated; contains one or two bound glycans. Not O-glycosylated.

It is found in the secreted. The protein localises to the target cell membrane. With respect to regulation, membrane attack complex (MAC) assembly is inhibited by CD59, thereby protecting self-cells from damage during complement activation. CD59 acts by binding to the beta-haipins of C8 (C8A and C8B), forming an intermolecular beta-sheet that prevents incorporation of the multiple copies of C9 required for complete formation of the osmolytic pore. MAC assembly is also inhibited by clusterin (CLU) chaperones that inhibit polymerization of C9. Functionally, component of the membrane attack complex (MAC), a multiprotein complex activated by the complement cascade, which inserts into a target cell membrane and forms a pore, leading to target cell membrane rupture and cell lysis. The MAC is initiated by proteolytic cleavage of C5 into complement C5b in response to the classical, alternative, lectin and GZMK complement pathways. The complement pathways consist in a cascade of proteins that leads to phagocytosis and breakdown of pathogens and signaling that strengthens the adaptive immune system. C8B, together with C8A and C8G, inserts into the target membrane, but does not form pores by itself. During MAC assembly, associates with C5b, C6 and C7 to form the C5b8 intermediate complex that inserts into the target membrane and traverses the bilayer increasing membrane rigidity. The protein is Complement component C8 beta chain of Homo sapiens (Human).